The sequence spans 185 residues: ADP-ribose 1''-phosphate phosphatase (185 aa).

Positions 1 to 185 (MSPARLRITD…VVEVVAWERA (185 aa)) constitute a Macro domain. Substrate is bound by residues 13-15 (GDL), 27-29 (ACN), 34-39 (WGGGIA), and 142-148 (INAGLFA).

Belongs to the POA1 family.

It carries out the reaction ADP-alpha-D-ribose 1''-phosphate + H2O = ADP-D-ribose + phosphate. In terms of biological role, highly specific phosphatase involved in the metabolism of ADP-ribose 1''-phosphate (Appr1p) which is produced as a consequence of tRNA splicing. The polypeptide is ADP-ribose 1''-phosphate phosphatase (POA1) (Chaetomium globosum (strain ATCC 6205 / CBS 148.51 / DSM 1962 / NBRC 6347 / NRRL 1970) (Soil fungus)).